The chain runs to 285 residues: MSIYLIALLPVLGWGFMPIIANLRKSTPEEQLLGTSISALLFAFILFWILSPEITVLSFIVSFVSGIFWSFGQLLQFKGIAASSVAKAMPISNGTQLVGATLFAVLVFQEWQTVTAVIIGVVAVILILIGVVMTGFQKRGNHITESVSFHVYGIVILSSFFLTLYVVTNQLFDVTGFSIILPQAIGMLTCAIGINLAKKTAISRKNVTFNLMTGLSWSIANLGMFLATAVLGVATSFSISQACVIVATIGGILIFKQKKSPLEWTFILSGILLIMVGVVFLSLLK.

Transmembrane regions (helical) follow at residues 2 to 21 (SIYLIALLPVLGWGFMPIIA), 31 to 50 (QLLGTSISALLFAFILFWIL), 55 to 77 (TVLSFIVSFVSGIFWSFGQLLQF), 111 to 133 (WQTVTAVIIGVVAVILILIGVVM), 146 to 168 (SVSFHVYGIVILSSFFLTLYVVT), 172 to 194 (FDVTGFSIILPQAIGMLTCAIGI), 207 to 229 (VTFNLMTGLSWSIANLGMFLATA), 233 to 255 (VATSFSISQACVIVATIGGILIF), and 262 to 284 (LEWTFILSGILLIMVGVVFLSLL).

This sequence belongs to the GRP transporter (TC 2.A.7.5) family.

The protein resides in the cell membrane. The polypeptide is Putative sugar uptake protein lin0444 (Listeria innocua serovar 6a (strain ATCC BAA-680 / CLIP 11262)).